We begin with the raw amino-acid sequence, 1075 residues long: Atos homolog protein A (1075 aa).

Residues 24 to 32 (ALLITEGRT) form a transactivation domain 1 (TAD1) region. Disordered regions lie at residues 430–469 (FGSP…RQPA), 570–592 (YSPQ…PDSI), and 703–766 (LNKN…PHSV). The segment covering 440–454 (DSREGKVREKSETRP) has biased composition (basic and acidic residues). Residues 703–712 (LNKNKTNCSS) show a composition bias toward polar residues. The span at 746–759 (DRLKTEQEAKRDSG) shows a compositional bias: basic and acidic residues. The segment at 878–935 (LLGNFEESVLNYRLDPLGIVDGFTAEVGASGTFCPTHLTLPVEVSFYSVSDDNAPSPY) is required for macropage invasion. Residues 962–970 (FNPNKTVVK) form a transactivation domain 2 (TAD2) region.

The protein belongs to the ATOS family.

The protein localises to the nucleus. Functionally, transcription regulator that syncronizes transcriptional and translational programs to promote macrophage invasion of tissues. The chain is Atos homolog protein A (Atosa) from Mus musculus (Mouse).